The primary structure comprises 172 residues: Protein-export protein SecB (172 aa).

This sequence belongs to the SecB family. In terms of assembly, homotetramer, a dimer of dimers. One homotetramer interacts with 1 SecA dimer.

Its subcellular location is the cytoplasm. Functionally, one of the proteins required for the normal export of preproteins out of the cell cytoplasm. It is a molecular chaperone that binds to a subset of precursor proteins, maintaining them in a translocation-competent state. It also specifically binds to its receptor SecA. The chain is Protein-export protein SecB from Maricaulis maris (strain MCS10) (Caulobacter maris).